The chain runs to 387 residues: Alpha-sarcoglycan (387 aa).

The N-terminal stretch at 1–24 is a signal peptide; sequence MAAAALLWLPLLVGCLAGPGGTEA. The Extracellular portion of the chain corresponds to 25–290; the sequence is QQTTLYPLVG…ATARDFLADA (266 aa). 2 N-linked (GlcNAc...) asparagine glycosylation sites follow: Asn174 and Asn246. Residues 291–311 traverse the membrane as a helical segment; it reads LVTLLVPLLVALLLALLLAYI. Residues 312–387 lie on the Cytoplasmic side of the membrane; the sequence is MCCRREGRLK…AQVPLILDQH (76 aa). A Phosphoserine modification is found at Ser377.

This sequence belongs to the sarcoglycan alpha/epsilon family. As to quaternary structure, cross-link to form 2 major subcomplexes: one consisting of SGCB, SGCD and SGCG and the other consisting of SGCB and SGCD. The association between SGCB and SGCG is particularly strong while SGCA is loosely associated with the other sarcoglycans. Interacts with the syntrophin SNTA1.

It is found in the cell membrane. The protein resides in the sarcolemma. The protein localises to the cytoplasm. It localises to the cytoskeleton. Functionally, component of the sarcoglycan complex, a subcomplex of the dystrophin-glycoprotein complex which forms a link between the F-actin cytoskeleton and the extracellular matrix. The sequence is that of Alpha-sarcoglycan (SGCA) from Oryctolagus cuniculus (Rabbit).